The chain runs to 271 residues: MNGESKRIVLGVQYDGTPWQGWQTQLNGLTVQDRLEFALSKFTLQTVSTVCAGRTDAGVHGLEQVVHFDTTLERDMSSWVRGVNTFLPPSIAVRWATEVAHNPDEQDNFHARFSARSRMYQYVLYNNPVRSPLLEGKAGWVFRKLDVERMRTAAQHLLGEHDFSTFRSVQCQAKSPVKSMYSIKIEQRGDLIMFTLHANAFLHHMVRNIVGSLIYVGNGAQQPDWLKELLDGRDRKFAAPTFMPDGLYLAKIDYDPKWQLPQLEVQNFLWS.

Asp56 (nucleophile) is an active-site residue. Tyr120 contributes to the substrate binding site.

This sequence belongs to the tRNA pseudouridine synthase TruA family. In terms of assembly, homodimer.

It catalyses the reaction uridine(38/39/40) in tRNA = pseudouridine(38/39/40) in tRNA. Formation of pseudouridine at positions 38, 39 and 40 in the anticodon stem and loop of transfer RNAs. The chain is tRNA pseudouridine synthase A from Janthinobacterium sp. (strain Marseille) (Minibacterium massiliensis).